We begin with the raw amino-acid sequence, 236 residues long: 2-C-methyl-D-erythritol 4-phosphate cytidylyltransferase (236 aa).

It belongs to the IspD/TarI cytidylyltransferase family. IspD subfamily.

It catalyses the reaction 2-C-methyl-D-erythritol 4-phosphate + CTP + H(+) = 4-CDP-2-C-methyl-D-erythritol + diphosphate. It functions in the pathway isoprenoid biosynthesis; isopentenyl diphosphate biosynthesis via DXP pathway; isopentenyl diphosphate from 1-deoxy-D-xylulose 5-phosphate: step 2/6. Its function is as follows. Catalyzes the formation of 4-diphosphocytidyl-2-C-methyl-D-erythritol from CTP and 2-C-methyl-D-erythritol 4-phosphate (MEP). In Symbiobacterium thermophilum (strain DSM 24528 / JCM 14929 / IAM 14863 / T), this protein is 2-C-methyl-D-erythritol 4-phosphate cytidylyltransferase.